Reading from the N-terminus, the 208-residue chain is Mitochondrial import inner membrane translocase subunit Tim23 (208 aa).

Transmembrane regions (helical) follow at residues 73–93 (FELA…FGTL), 125–145 (ASWA…GVAI), and 173–193 (GLKG…LYAL).

It belongs to the Tim17/Tim22/Tim23 family. In terms of assembly, component of the TIM23 complex at least composed of timm23, timm17 and timm50. The complex interacts with the timm44 component of the PAM complex.

The protein localises to the mitochondrion inner membrane. Its function is as follows. Essential component of the TIM23 complex, a complex that mediates the translocation of transit peptide-containing proteins across the mitochondrial inner membrane. Plays an essential role in early embryonic development. This Danio rerio (Zebrafish) protein is Mitochondrial import inner membrane translocase subunit Tim23 (timm23).